A 44-amino-acid chain; its full sequence is DNA-directed RNA polymerase subunit Rpo12 (44 aa).

Positions 8, 22, and 25 each coordinate Zn(2+).

It belongs to the archaeal Rpo12/eukaryotic RPC10 RNA polymerase subunit family. Part of the RNA polymerase complex. The cofactor is Zn(2+).

It localises to the cytoplasm. It carries out the reaction RNA(n) + a ribonucleoside 5'-triphosphate = RNA(n+1) + diphosphate. In terms of biological role, DNA-dependent RNA polymerase (RNAP) catalyzes the transcription of DNA into RNA using the four ribonucleoside triphosphates as substrates. The chain is DNA-directed RNA polymerase subunit Rpo12 from Natronomonas pharaonis (strain ATCC 35678 / DSM 2160 / CIP 103997 / JCM 8858 / NBRC 14720 / NCIMB 2260 / Gabara) (Halobacterium pharaonis).